The sequence spans 89 residues: Pigment dispersing factor homolog pdf-2 (89 aa).

A signal peptide spans 1–27 (MSSRISVSLLLLAVVATMFFTANVVDA).

In terms of biological role, probable ligand of isoforms a and b of the calcitonin receptor-like protein, pdfr-1, a G-protein coupled receptor. May not signal through isoform c of pdfr-1. Involved in locomotion; may play a role in circadian rhythms of locomotor activity. Modulator of egg-laying. In Caenorhabditis elegans, this protein is Pigment dispersing factor homolog pdf-2.